Reading from the N-terminus, the 332-residue chain is DNA-directed RNA polymerase subunit alpha (332 aa).

The tract at residues Met-1 to Thr-234 is alpha N-terminal domain (alpha-NTD). The interval Val-248–Gly-332 is alpha C-terminal domain (alpha-CTD).

It belongs to the RNA polymerase alpha chain family. In terms of assembly, homodimer. The RNAP catalytic core consists of 2 alpha, 1 beta, 1 beta' and 1 omega subunit. When a sigma factor is associated with the core the holoenzyme is formed, which can initiate transcription.

The catalysed reaction is RNA(n) + a ribonucleoside 5'-triphosphate = RNA(n+1) + diphosphate. Functionally, DNA-dependent RNA polymerase catalyzes the transcription of DNA into RNA using the four ribonucleoside triphosphates as substrates. The polypeptide is DNA-directed RNA polymerase subunit alpha (Xylella fastidiosa (strain M12)).